The sequence spans 203 residues: Endo-type membrane-bound lytic murein transglycosylase A (203 aa).

Residues 1–15 (MKLRWFAFLVVILAG) form the signal peptide. Cys16 carries the N-palmitoyl cysteine lipid modification. Cys16 carries the S-diacylglycerol cysteine lipid modification.

This sequence belongs to the transglycosylase Slt family.

It localises to the cell outer membrane. It carries out the reaction Endolytic cleavage of the (1-&gt;4)-beta-glycosidic linkage between N-acetylmuramic acid (MurNAc) and N-acetylglucosamine (GlcNAc) residues in peptidoglycan with concomitant formation of a 1,6-anhydrobond in the MurNAc residue.. Murein-degrading enzyme. May play a role in recycling of muropeptides during cell elongation and/or cell division. Preferentially cleaves at a distance of more than two disaccharide units from the ends of the glycan chain. The protein is Endo-type membrane-bound lytic murein transglycosylase A of Salmonella paratyphi C (strain RKS4594).